The chain runs to 186 residues: Bilin biosynthesis protein CpeZ (186 aa).

Its function is as follows. Involved in the biosynthesis of bilin. This is Bilin biosynthesis protein CpeZ (cpeZ) from Synechococcus sp. (strain WH8020).